A 397-amino-acid polypeptide reads, in one-letter code: Purine ribonucleoside efflux pump NepI (397 aa).

Residues 1–21 (MNENIAEKFRADGVARPNWSA) lie on the Cytoplasmic side of the membrane. Residues 22–42 (VFAVAFCVACLITVEFLPVSL) form a helical membrane-spanning segment. Residues 43-54 (LTPMAQDLGISE) lie on the Periplasmic side of the membrane. The chain crosses the membrane as a helical span at residues 55–75 (GVAGQSVTVTAFVAMFSSLFI). Over 76 to 85 (TQIIQATDRR) the chain is Cytoplasmic. Residues 86 to 106 (YIVILFAVLLTASCLMVSFAN) traverse the membrane as a helical segment. Residue Ser107 is a topological domain, periplasmic. A helical transmembrane segment spans residues 108 to 128 (FTLLLLGRACLGLALGGFWAI). The Cytoplasmic portion of the chain corresponds to 129–147 (SASLTMRLVPARTVPKALS). A helical membrane pass occupies residues 148–168 (VIFGAVSIALVIAAPLGSFLG). The Periplasmic portion of the chain corresponds to 169–175 (GIIGWRN). The chain crosses the membrane as a helical span at residues 176–196 (VFNAAAVMGVLCVIWVVKSLP). Topologically, residues 197 to 215 (SLPGEPSHQKQNMFSLLQR) are cytoplasmic. The helical transmembrane segment at 216-236 (PGVMAGMIAIFMSFAGQFAFF) threads the bilayer. Over 237–255 (TYIRPVYMNLAGFDVDGLT) the chain is Periplasmic. The chain crosses the membrane as a helical span at residues 256–276 (LVLLSFGIASFVGTSFSSYVL). At 277–281 (KRSVK) the chain is on the cytoplasmic side. A helical membrane pass occupies residues 282-302 (LALAGAPLLLALSALTLIVWG). Topologically, residues 303 to 305 (SDK) are periplasmic. The chain crosses the membrane as a helical span at residues 306 to 326 (TVAAAIAIIWGLAFALVPVGW). Topologically, residues 327 to 343 (STWITRSLADQAEKAGS) are cytoplasmic. Residues 344 to 364 (IQVAVIQLANTCGAAVGGYAL) traverse the membrane as a helical segment. At 365–366 (DN) the chain is on the periplasmic side. Residues 367 to 387 (FGLLSPLALSGGLMLLTALVV) form a helical membrane-spanning segment. At 388-397 (AAKVRITPMS) the chain is on the cytoplasmic side.

The protein belongs to the major facilitator superfamily. DHA1 family. NepI (TC 2.A.1.2.26) subfamily.

The protein resides in the cell inner membrane. It catalyses the reaction inosine(in) + H(+)(out) = inosine(out) + H(+)(in). It carries out the reaction guanosine(in) + H(+)(out) = guanosine(out) + H(+)(in). Functionally, involved in the efflux of purine ribonucleosides, such as inosine and guanosine. The polypeptide is Purine ribonucleoside efflux pump NepI (Salmonella paratyphi A (strain ATCC 9150 / SARB42)).